We begin with the raw amino-acid sequence, 163 residues long: Glutathione peroxidase-like peroxiredoxin HYR1 (163 aa).

Cys36 acts as the Cysteine sulfenic acid (-SOH) intermediate in catalysis. A disulfide bridge links Cys36 with Cys82.

The protein belongs to the glutathione peroxidase family. As to quaternary structure, interacts with YAP1 and probably YBP1.

Its subcellular location is the cytoplasm. It localises to the mitochondrion intermembrane space. The protein localises to the peroxisome matrix. It carries out the reaction a hydroperoxide + [thioredoxin]-dithiol = an alcohol + [thioredoxin]-disulfide + H2O. Its function is as follows. Involved in oxidative stress response and redox homeostasis. Functions as a sensor and transducer of hydroperoxide stress. In response to hydroperoxide stress it oxidizes (activates) the transcription activator YAP1, which is involved in transcription activation of genes of the oxidative stress response pathway. May also play a direct role in hydroperoxide scavenging, being the most active of three closely related S.cerevisiae peroxiredoxins (GPX1, GPX2, and HYR1/GPX3) with respect to peroxide and lipid hydroperoxide reduction. The three enzymes are not required for the glutaredoxin-mediated antioxidant function. In the presence of peroxides, HYR1/GPX3 is directly oxidized at Cys-36 to form a cysteine sulfenic acid (-SOH). Cys-36-SOH then forms either an intramolecular disulfide bond (Cys-36 with Cys-82) or a transient, intermolecular disulfide bond with 'Cys-598' of YAP1, which is further resolved into a YAP1 intramolecular disulfide bond ('Cys-303' with 'Cys-598'), which causes its nuclear accumulation and activation, and a reduced Cys-36 in HYR1/GPX3. The polypeptide is Glutathione peroxidase-like peroxiredoxin HYR1 (Saccharomyces cerevisiae (strain ATCC 204508 / S288c) (Baker's yeast)).